Here is a 392-residue protein sequence, read N- to C-terminus: Formate-dependent phosphoribosylglycinamide formyltransferase (392 aa).

N(1)-(5-phospho-beta-D-ribosyl)glycinamide is bound by residues 22 to 23 (EL) and glutamate 82. ATP-binding positions include arginine 114, lysine 155, 160–165 (SSGKGQ), 195–198 (EGVV), and glutamate 203. One can recognise an ATP-grasp domain in the interval 119–308 (RLAAEELGLP…EFALHVRAFL (190 aa)). Mg(2+) contacts are provided by glutamate 267 and glutamate 279. N(1)-(5-phospho-beta-D-ribosyl)glycinamide contacts are provided by residues aspartate 286, lysine 355, and 362–363 (RR).

Belongs to the PurK/PurT family. As to quaternary structure, homodimer.

The enzyme catalyses N(1)-(5-phospho-beta-D-ribosyl)glycinamide + formate + ATP = N(2)-formyl-N(1)-(5-phospho-beta-D-ribosyl)glycinamide + ADP + phosphate + H(+). It functions in the pathway purine metabolism; IMP biosynthesis via de novo pathway; N(2)-formyl-N(1)-(5-phospho-D-ribosyl)glycinamide from N(1)-(5-phospho-D-ribosyl)glycinamide (formate route): step 1/1. Involved in the de novo purine biosynthesis. Catalyzes the transfer of formate to 5-phospho-ribosyl-glycinamide (GAR), producing 5-phospho-ribosyl-N-formylglycinamide (FGAR). Formate is provided by PurU via hydrolysis of 10-formyl-tetrahydrofolate. The sequence is that of Formate-dependent phosphoribosylglycinamide formyltransferase from Salmonella paratyphi B (strain ATCC BAA-1250 / SPB7).